Reading from the N-terminus, the 250-residue chain is Triosephosphate isomerase (250 aa).

9–11 lines the substrate pocket; the sequence is NWK. His94 functions as the Electrophile in the catalytic mechanism. Glu166 functions as the Proton acceptor in the catalytic mechanism. Substrate is bound by residues Gly172, Ser212, and 233 to 234; that span reads GG.

The protein belongs to the triosephosphate isomerase family. In terms of assembly, homodimer.

It localises to the cytoplasm. It catalyses the reaction D-glyceraldehyde 3-phosphate = dihydroxyacetone phosphate. It participates in carbohydrate biosynthesis; gluconeogenesis. The protein operates within carbohydrate degradation; glycolysis; D-glyceraldehyde 3-phosphate from glycerone phosphate: step 1/1. Involved in the gluconeogenesis. Catalyzes stereospecifically the conversion of dihydroxyacetone phosphate (DHAP) to D-glyceraldehyde-3-phosphate (G3P). The sequence is that of Triosephosphate isomerase from Thermus thermophilus (strain ATCC 27634 / DSM 579 / HB8).